The following is a 207-amino-acid chain: Histone H1-like protein HC2 (207 aa).

Composition is skewed to basic residues over residues 1-50 (MLGV…KTVA) and 59-72 (PAAKKTAAKKAPVR). Residues 1–72 (MLGVQKKRST…KTAAKKAPVR (72 aa)) form a disordered region. Tandem repeats lie at residues 35–58 (VRKVAAKKTVARKTVAKKAVAARK), 71–94 (VRKVAAKKTVARKTVAKKAVAARK), and 113–136 (VRKVAAKKTVARKTVAKKAVAARK). The 3 X 24 AA repeats of V-R-K-V-A-A-K-K-T-V-A-R-K-T-V-A-K-K-A-V-A-A-R-K stretch occupies residues 35–136 (VRKVAAKKTV…VAKKAVAARK (102 aa)).

The protein belongs to the histone H1/H5 family. HCT subfamily.

Functionally, might have a role in establishing the nucleoid structure of elementary bodies. In Chlamydia muridarum (strain MoPn / Nigg), this protein is Histone H1-like protein HC2 (hctB).